The primary structure comprises 142 residues: 3-hydroxyacyl-[acyl-carrier-protein] dehydratase FabZ (142 aa).

Residue H48 is part of the active site.

Belongs to the thioester dehydratase family. FabZ subfamily.

The protein localises to the cytoplasm. It catalyses the reaction a (3R)-hydroxyacyl-[ACP] = a (2E)-enoyl-[ACP] + H2O. Its function is as follows. Involved in unsaturated fatty acids biosynthesis. Catalyzes the dehydration of short chain beta-hydroxyacyl-ACPs and long chain saturated and unsaturated beta-hydroxyacyl-ACPs. This chain is 3-hydroxyacyl-[acyl-carrier-protein] dehydratase FabZ, found in Desulforamulus reducens (strain ATCC BAA-1160 / DSM 100696 / MI-1) (Desulfotomaculum reducens).